Here is a 519-residue protein sequence, read N- to C-terminus: Acetylcholine receptor subunit gamma (519 aa).

The N-terminal stretch at 1–22 (MCGGQRPLFLLPLLAVCLGAKG) is a signal peptide. Residues 23–240 (RNQEERLLGD…VVFYLLIQRK (218 aa)) are Extracellular-facing. N-linked (GlcNAc...) asparagine glycosylation is found at Asn-52 and Asn-163. Cys-150 and Cys-164 are joined by a disulfide. The next 3 membrane-spanning stretches (helical) occupy residues 241–265 (PLFY…IYFL), 274–292 (CTVA…FLVA), and 308–329 (YLTF…VLNV). The Cytoplasmic segment spans residues 330–476 (SLRSPHTHSM…WFLVGRVLDR (147 aa)). A helical transmembrane segment spans residues 477 to 497 (VCFLAMLSLFVCGTAGIFLMA).

This sequence belongs to the ligand-gated ion channel (TC 1.A.9) family. Acetylcholine receptor (TC 1.A.9.1) subfamily. Gamma/CHRNG sub-subfamily. In terms of assembly, pentamer of two alpha chains, and one each of the beta, delta, and gamma (in immature muscle) or epsilon (in mature muscle) chains.

The protein resides in the postsynaptic cell membrane. It is found in the cell membrane. The enzyme catalyses K(+)(in) = K(+)(out). The catalysed reaction is Na(+)(in) = Na(+)(out). Its function is as follows. After binding acetylcholine, the AChR responds by an extensive change in conformation that affects all subunits and leads to opening of an ion-conducting channel across the plasma membrane. The chain is Acetylcholine receptor subunit gamma (CHRNG) from Bos taurus (Bovine).